Here is a 146-residue protein sequence, read N- to C-terminus: uncharacterized protein (146 aa).

The Toprim domain maps to 31–119 (EKVMIVEGKS…RAYKEVAAAP (89 aa)).

This is an uncharacterized protein from Bacillus subtilis (strain 168).